A 622-amino-acid polypeptide reads, in one-letter code: uncharacterized protein (622 aa).

Basic and acidic residues predominate over residues 157–166 (LKESPLRDQQ). Residues 157–238 (LKESPLRDQQ…GLPDHNSISE (82 aa)) are disordered.

This is an uncharacterized protein from Homo sapiens (Human).